Reading from the N-terminus, the 512-residue chain is ATP synthase subunit alpha (512 aa).

An ATP-binding site is contributed by Gly-169 to Thr-176.

Belongs to the ATPase alpha/beta chains family. F-type ATPases have 2 components, CF(1) - the catalytic core - and CF(0) - the membrane proton channel. CF(1) has five subunits: alpha(3), beta(3), gamma(1), delta(1), epsilon(1). CF(0) has three main subunits: a(1), b(2) and c(9-12). The alpha and beta chains form an alternating ring which encloses part of the gamma chain. CF(1) is attached to CF(0) by a central stalk formed by the gamma and epsilon chains, while a peripheral stalk is formed by the delta and b chains.

Its subcellular location is the cell inner membrane. The catalysed reaction is ATP + H2O + 4 H(+)(in) = ADP + phosphate + 5 H(+)(out). In terms of biological role, produces ATP from ADP in the presence of a proton gradient across the membrane. The alpha chain is a regulatory subunit. In Azoarcus sp. (strain BH72), this protein is ATP synthase subunit alpha.